The sequence spans 646 residues: Exoribonuclease 2 (646 aa).

The 328-residue stretch at 191 to 518 folds into the RNB domain; the sequence is RIDLTALDFV…NHRLLKAIIQ (328 aa). One can recognise an S1 motif domain in the interval 563–645; the sequence is DKTFSAEIVD…ETRNIVARPV (83 aa).

The protein belongs to the RNR ribonuclease family. RNase II subfamily.

It localises to the cytoplasm. The enzyme catalyses Exonucleolytic cleavage in the 3'- to 5'-direction to yield nucleoside 5'-phosphates.. Functionally, involved in mRNA degradation. Hydrolyzes single-stranded polyribonucleotides processively in the 3' to 5' direction. The chain is Exoribonuclease 2 from Xenorhabdus bovienii (strain SS-2004) (Xenorhabdus nematophila subsp. bovienii).